The following is a 327-amino-acid chain: Ribose-phosphate pyrophosphokinase (327 aa).

ATP-binding positions include 40-42 and 99-100; these read DGE and RQ. Mg(2+) is bound by residues histidine 134 and aspartate 173. The active site involves lysine 196. D-ribose 5-phosphate-binding positions include arginine 198, aspartate 222, and 226 to 230; that span reads DTANT.

It belongs to the ribose-phosphate pyrophosphokinase family. Class I subfamily. In terms of assembly, homohexamer. The cofactor is Mg(2+).

The protein resides in the cytoplasm. The enzyme catalyses D-ribose 5-phosphate + ATP = 5-phospho-alpha-D-ribose 1-diphosphate + AMP + H(+). Its pathway is metabolic intermediate biosynthesis; 5-phospho-alpha-D-ribose 1-diphosphate biosynthesis; 5-phospho-alpha-D-ribose 1-diphosphate from D-ribose 5-phosphate (route I): step 1/1. Its function is as follows. Involved in the biosynthesis of the central metabolite phospho-alpha-D-ribosyl-1-pyrophosphate (PRPP) via the transfer of pyrophosphoryl group from ATP to 1-hydroxyl of ribose-5-phosphate (Rib-5-P). The chain is Ribose-phosphate pyrophosphokinase from Neisseria meningitidis serogroup A / serotype 4A (strain DSM 15465 / Z2491).